A 267-amino-acid chain; its full sequence is Large ribosomal subunit protein mL57 (267 aa).

The segment covering 43–54 has biased composition (low complexity); the sequence is SSSAVQQEQDAS. Residues 43–73 are disordered; it reads SSSAVQQEQDASGTSSSQQPRPRWSYTPERM.

This sequence belongs to the ribonuclease III family. Mitochondrion-specific ribosomal protein mL57 subfamily. As to quaternary structure, component of the mitochondrial large ribosomal subunit (mt-LSU). Mature N.crassa 74S mitochondrial ribosomes consist of a small (37S) and a large (54S) subunit. The 37S small subunit contains a 16S ribosomal RNA (16S mt-rRNA) and 32 different proteins. The 54S large subunit contains a 23S rRNA (23S mt-rRNA) and 42 different proteins. mL57 forms a heterodimer with mL44 and stabilizes rRNA expansion segments 1/2 at a membrane-facing protuberance close to the point of attachment of the ribosome to the translocon in the membrane.

Its subcellular location is the mitochondrion. Its function is as follows. Component of the mitochondrial ribosome (mitoribosome), a dedicated translation machinery responsible for the synthesis of mitochondrial genome-encoded proteins, including at least some of the essential transmembrane subunits of the mitochondrial respiratory chain. The mitoribosomes are attached to the mitochondrial inner membrane and translation products are cotranslationally integrated into the membrane. This chain is Large ribosomal subunit protein mL57 (mrpl15), found in Neurospora crassa (strain ATCC 24698 / 74-OR23-1A / CBS 708.71 / DSM 1257 / FGSC 987).